A 390-amino-acid chain; its full sequence is F-box/kelch-repeat protein At4g39753 (390 aa).

Low complexity predominate over residues 1–16; the sequence is MVTFWAETAASAATTS. Residues 1–33 are disordered; sequence MVTFWAETAASAATTSKGEPPSKKRKTNPSPPP. Positions 32–79 constitute an F-box domain; it reads PPSLLSLPDVLILNCLSRIPKSYYPKLSIVSKTFRDLIISIDLNHARF. 4 Kelch repeats span residues 139 to 192, 193 to 243, 245 to 286, and 288 to 321; these read PLLV…VFDR, KIYV…MIQG, FYVR…WYSC, and PNSF…LIET.

The polypeptide is F-box/kelch-repeat protein At4g39753 (Arabidopsis thaliana (Mouse-ear cress)).